A 485-amino-acid polypeptide reads, in one-letter code: Cholesterol 16,22-dihydroxylase CYP90G4 (485 aa).

A helical transmembrane segment spans residues 4-24 (VVILFFLFPTLLVLVVAVLGL). Heme is bound at residue cysteine 432.

This sequence belongs to the cytochrome P450 family. Mainly expressed in leaves and, at low levels, in roots and stems.

It localises to the membrane. The enzyme catalyses cholesterol + 2 reduced [NADPH--hemoprotein reductase] + 2 O2 = (16S,22S)-dihydroxycholesterol + 2 oxidized [NADPH--hemoprotein reductase] + 2 H2O + 2 H(+). Its pathway is steroid metabolism; cholesterol metabolism. Functionally, involved in the biosynthesis of spiroketal steroid and saponin natural products from cholesterol such as diosgenin and analogs (e.g. furostanol and spirostanol), plant defense compounds used as main precursors for the industrial production of steroid hormones. During the 5,6-spiroketalization of cholesterol, catalyzes the hydroxylation of cholesterol to form 16S,22S-dihydroxycholesterol and, possibly, the subsequent conversion of 16S,22S-dihydroxycholesterol into 16-oxo-22-hydroxy-cholesterol and 16-hydroxy-22-oxo-cholesterol. 16-hydroxy-22-oxo-cholesterol submit a spontaneous reaction leading to the production of furostanol-type steroid diastereomers, precursors of diosgenin. The chain is Cholesterol 16,22-dihydroxylase CYP90G4 from Paris polyphylla (Daiswa polyphylla).